We begin with the raw amino-acid sequence, 118 residues long: Co-chaperonin GroES (118 aa).

The protein belongs to the GroES chaperonin family. As to quaternary structure, heptamer of 7 subunits arranged in a ring. Interacts with the chaperonin GroEL.

It localises to the cytoplasm. Functionally, together with the chaperonin GroEL, plays an essential role in assisting protein folding. The GroEL-GroES system forms a nano-cage that allows encapsulation of the non-native substrate proteins and provides a physical environment optimized to promote and accelerate protein folding. GroES binds to the apical surface of the GroEL ring, thereby capping the opening of the GroEL channel. The protein is Co-chaperonin GroES of Helicobacter pylori (strain G27).